The following is a 166-amino-acid chain: Large ribosomal subunit protein uL18c (166 aa).

The transit peptide at 1–44 (MAAATSLSFFHSTLASSSSSSVQQLSLPPKFVNFRPQTLPLIQA) directs the protein to the chloroplast.

It belongs to the universal ribosomal protein uL18 family. In terms of assembly, component of the chloroplast large ribosomal subunit (LSU). Mature 70S chloroplast ribosomes of higher plants consist of a small (30S) and a large (50S) subunit. The 30S small subunit contains 1 molecule of ribosomal RNA (16S rRNA) and 24 different proteins. The 50S large subunit contains 3 rRNA molecules (23S, 5S and 4.5S rRNA) and 33 different proteins.

Its subcellular location is the plastid. It is found in the chloroplast. In terms of biological role, component of the chloroplast ribosome (chloro-ribosome), a dedicated translation machinery responsible for the synthesis of chloroplast genome-encoded proteins, including proteins of the transcription and translation machinery and components of the photosynthetic apparatus. In Spinacia oleracea (Spinach), this protein is Large ribosomal subunit protein uL18c (RPL18).